Here is a 65-residue protein sequence, read N- to C-terminus: Large ribosomal subunit protein bL31 (65 aa).

4 residues coordinate Zn(2+): cysteine 16, cysteine 18, cysteine 36, and cysteine 39.

This sequence belongs to the bacterial ribosomal protein bL31 family. Type A subfamily. In terms of assembly, part of the 50S ribosomal subunit. Requires Zn(2+) as cofactor.

Binds the 23S rRNA. This Desulfitobacterium hafniense (strain DSM 10664 / DCB-2) protein is Large ribosomal subunit protein bL31.